Here is a 217-residue protein sequence, read N- to C-terminus: Large ribosomal subunit protein uL3 (217 aa).

The tract at residues 129 to 161 is disordered; sequence SRGPMSHGSKNHRAPGSTGAGTTPGRIYPGKRM. Positions 142 to 153 are enriched in low complexity; the sequence is APGSTGAGTTPG.

The protein belongs to the universal ribosomal protein uL3 family. As to quaternary structure, part of the 50S ribosomal subunit. Forms a cluster with proteins L14 and L19.

Functionally, one of the primary rRNA binding proteins, it binds directly near the 3'-end of the 23S rRNA, where it nucleates assembly of the 50S subunit. The chain is Large ribosomal subunit protein uL3 from Prochlorococcus marinus subsp. pastoris (strain CCMP1986 / NIES-2087 / MED4).